A 560-amino-acid chain; its full sequence is Putative transport protein VS_1837 (560 aa).

The next 5 membrane-spanning stretches (helical) occupy residues 5–25, 37–57, 66–86, 91–111, and 155–175; these read VVLL…SIGL, LGNS…GFSF, FMLF…GIFF, HYLI…YFCS, and LGLV…VGLI. 2 RCK C-terminal domains span residues 203-292 and 293-376; these read RGLG…FRNG and KEVF…KIGF. 6 helical membrane-spanning segments follow: residues 386–406, 409–429, 450–470, 478–498, 506–526, and 539–559; these read LTAF…TMTF, VSFG…LGFL, LGLM…IFEH, VIGI…LVGA, ALLF…DIVN, and AGTY…IIII.

It belongs to the AAE transporter (TC 2.A.81) family. YbjL subfamily.

The protein resides in the cell membrane. The sequence is that of Putative transport protein VS_1837 from Vibrio atlanticus (strain LGP32) (Vibrio splendidus (strain Mel32)).